We begin with the raw amino-acid sequence, 220 residues long: Protein GrpE (220 aa).

The tract at residues 1–55 (MCGGDVQGQGVASGCDEALERADSLRASDPVPVESGEGSVPGEHSQELETGASEE) is disordered.

It belongs to the GrpE family. As to quaternary structure, homodimer.

The protein localises to the cytoplasm. Its function is as follows. Participates actively in the response to hyperosmotic and heat shock by preventing the aggregation of stress-denatured proteins, in association with DnaK and GrpE. It is the nucleotide exchange factor for DnaK and may function as a thermosensor. Unfolded proteins bind initially to DnaJ; upon interaction with the DnaJ-bound protein, DnaK hydrolyzes its bound ATP, resulting in the formation of a stable complex. GrpE releases ADP from DnaK; ATP binding to DnaK triggers the release of the substrate protein, thus completing the reaction cycle. Several rounds of ATP-dependent interactions between DnaJ, DnaK and GrpE are required for fully efficient folding. The polypeptide is Protein GrpE (Treponema pallidum (strain Nichols)).